Reading from the N-terminus, the 329-residue chain is Quinone oxidoreductase (329 aa).

The residue at position 2 (A2) is an N-acetylalanine. Position 23 is an N6-acetyllysine (K23). NADP(+)-binding positions include Y53, 158 to 161 (SGGV), G181, H200, N229, 246 to 249 (VGSR), and 269 to 271 (VTV). S248 is modified (phosphoserine). K296 carries the N6-succinyllysine modification.

Belongs to the zinc-containing alcohol dehydrogenase family. Quinone oxidoreductase subfamily. In terms of assembly, homotetramer.

The protein resides in the cytoplasm. The catalysed reaction is 2 a quinone + NADPH + H(+) = 2 a 1,4-benzosemiquinone + NADP(+). In terms of biological role, does not have alcohol dehydrogenase activity. Binds NADP and acts through a one-electron transfer process. Orthoquinones, such as 1,2-naphthoquinone or 9,10-phenanthrenequinone, are the best substrates (in vitro). May act in the detoxification of xenobiotics. Interacts with (AU)-rich elements (ARE) in the 3'-UTR of target mRNA species and enhances their stability. NADPH binding interferes with mRNA binding. The chain is Quinone oxidoreductase (CRYZ) from Pongo abelii (Sumatran orangutan).